A 192-amino-acid chain; its full sequence is Ion-translocating oxidoreductase complex subunit A (192 aa).

The next 6 helical transmembrane spans lie at 5–25 (ILLIISTALINNFVLVKFLGL), 39–59 (IGMSLATMFVLTVASISAYLI), 63–83 (ILTPLSATFLRTLVFILVIAV), 102–122 (LLGIFLPLITTNCAVLGVALL), 134–154 (VIYGFGASLGFGLVLVLFAAL), and 171–191 (SIALITAGLMSLAFMGFTGLV).

The protein belongs to the NqrDE/RnfAE family. The complex is composed of six subunits: RnfA, RnfB, RnfC, RnfD, RnfE and RnfG.

It localises to the cell inner membrane. Functionally, part of a membrane-bound complex that couples electron transfer with translocation of ions across the membrane. The polypeptide is Ion-translocating oxidoreductase complex subunit A (Pasteurella multocida (strain Pm70)).